A 632-amino-acid chain; its full sequence is ATP-dependent zinc metalloprotease FtsH (632 aa).

At 1-9 (MKPTNEPKK) the chain is on the cytoplasmic side. Residues 10 to 30 (PFFQSPIILAVLGGILLIFFL) form a helical membrane-spanning segment. The Periplasmic segment spans residues 31–116 (RSFNSDGSFS…INYSGFSESN (86 aa)). The helical transmembrane segment at 117 to 137 (FFTDMLGWLMPILVILGLWMF) threads the bilayer. The Cytoplasmic portion of the chain corresponds to 138–632 (MANRMQKNMG…RLIPLEEQAS (495 aa)). Residues Ala-173, 213 to 217 (GTGKT), and His-354 each bind ATP. His-434 provides a ligand contact to Zn(2+). Glu-435 is an active-site residue. His-438 and Asp-511 together coordinate Zn(2+).

This sequence in the central section; belongs to the AAA ATPase family. The protein in the C-terminal section; belongs to the peptidase M41 family. Homohexamer. Zn(2+) serves as cofactor.

It is found in the cell inner membrane. Functionally, acts as a processive, ATP-dependent zinc metallopeptidase for both cytoplasmic and membrane proteins. Plays a role in the quality control of integral membrane proteins. This Helicobacter pylori (strain ATCC 700392 / 26695) (Campylobacter pylori) protein is ATP-dependent zinc metalloprotease FtsH.